Consider the following 185-residue polypeptide: MIEASKLKAGMTFEAEGKLIRVLEASHHKPGKGNTIMRMKLRDVRTGSTFDTTYRPDEKFEQAIIETVPAQYLYKMDDTAYFMNTDTYDQYEIPVANVEQELLYILENSDVKIQFYGSEVIGVTVPTTVELTVAETQPSIKGATVTGSGKPATLETGLVVNVPDFIEAGQKLIINTAEGTYVSRA.

Belongs to the elongation factor P family.

It is found in the cytoplasm. It participates in protein biosynthesis; polypeptide chain elongation. Involved in peptide bond synthesis. Stimulates efficient translation and peptide-bond synthesis on native or reconstituted 70S ribosomes in vitro. Probably functions indirectly by altering the affinity of the ribosome for aminoacyl-tRNA, thus increasing their reactivity as acceptors for peptidyl transferase. The sequence is that of Elongation factor P from Streptococcus pyogenes serotype M5 (strain Manfredo).